A 436-amino-acid chain; its full sequence is Enolase (436 aa).

Substrate contacts are provided by His-159 and Glu-168. The active-site Proton donor is Glu-211. Mg(2+) contacts are provided by Asp-246, Glu-295, and Asp-322. Glu-295 and Asp-322 together coordinate substrate. The active-site Proton acceptor is the Lys-347. Substrate is bound by residues Ser-374–Ser-377 and Lys-398.

The protein belongs to the enolase family. Homodimer. Requires Mg(2+) as cofactor.

Its subcellular location is the cytoplasm. The catalysed reaction is (2R)-2-phosphoglycerate = phosphoenolpyruvate + H2O. Its pathway is carbohydrate degradation; glycolysis; pyruvate from D-glyceraldehyde 3-phosphate: step 4/5. This is Enolase from Neocallimastix frontalis (Rumen fungus).